A 569-amino-acid polypeptide reads, in one-letter code: Alpha-keto-acid decarboxylase (569 aa).

Glutamate 57 is a binding site for thiamine diphosphate. The segment at 392 to 474 (TAFYGMVEHR…VVVNNDGYTI (83 aa)) is thiamine pyrophosphate binding. Mg(2+)-binding residues include aspartate 442, asparagine 469, and glycine 471.

The protein belongs to the TPP enzyme family. Requires a metal cation as cofactor. Thiamine diphosphate is required as a cofactor.

Decarboxylates branched-chain and aromatic alpha-keto acids to aldehydes. This is Alpha-keto-acid decarboxylase (kdc) from Mycobacterium leprae (strain TN).